A 483-amino-acid polypeptide reads, in one-letter code: Trimethylamine methyltransferase MttB (483 aa).

Pyl334 is a non-standard amino acid (pyrrolysine).

It belongs to the trimethylamine methyltransferase family. Can form a complex with MttC.

It carries out the reaction Co(I)-[trimethylamine-specific corrinoid protein] + trimethylamine + H(+) = methyl-Co(III)-[trimethylamine-specific corrinoid protein] + dimethylamine. The protein operates within one-carbon metabolism; methanogenesis from trimethylamine. Functionally, catalyzes the transfer of a methyl group from trimethylamine to the corrinoid cofactor of MttC. This Methanosarcina thermophila protein is Trimethylamine methyltransferase MttB (mttB).